Here is a 137-residue protein sequence, read N- to C-terminus: Large ribosomal subunit protein uL16c (137 aa).

The protein belongs to the universal ribosomal protein uL16 family. As to quaternary structure, part of the 50S ribosomal subunit.

It is found in the plastid. The protein localises to the chloroplast. In Hordeum vulgare (Barley), this protein is Large ribosomal subunit protein uL16c.